A 122-amino-acid polypeptide reads, in one-letter code: Alpha-amylase/trypsin inhibitor (122 aa).

Disulfide bonds link Cys-6–Cys-55, Cys-20–Cys-44, Cys-29–Cys-85, Cys-45–Cys-103, and Cys-57–Cys-114.

The protein belongs to the protease inhibitor I6 (cereal trypsin/alpha-amylase inhibitor) family. As to expression, seeds.

Its subcellular location is the secreted. In terms of biological role, may play a protective role against endo- and exogenous hydrolytic activities in the Ragi seeds. In Eleusine coracana (Indian finger millet), this protein is Alpha-amylase/trypsin inhibitor.